The following is a 294-amino-acid chain: 4-hydroxy-tetrahydrodipicolinate synthase (294 aa).

Threonine 45 provides a ligand contact to pyruvate. Catalysis depends on tyrosine 133, which acts as the Proton donor/acceptor. Catalysis depends on lysine 162, which acts as the Schiff-base intermediate with substrate. Isoleucine 204 provides a ligand contact to pyruvate.

It belongs to the DapA family. Homotetramer; dimer of dimers.

The protein resides in the cytoplasm. The catalysed reaction is L-aspartate 4-semialdehyde + pyruvate = (2S,4S)-4-hydroxy-2,3,4,5-tetrahydrodipicolinate + H2O + H(+). The protein operates within amino-acid biosynthesis; L-lysine biosynthesis via DAP pathway; (S)-tetrahydrodipicolinate from L-aspartate: step 3/4. Catalyzes the condensation of (S)-aspartate-beta-semialdehyde [(S)-ASA] and pyruvate to 4-hydroxy-tetrahydrodipicolinate (HTPA). This Rhizobium meliloti (strain 1021) (Ensifer meliloti) protein is 4-hydroxy-tetrahydrodipicolinate synthase.